The primary structure comprises 157 residues: SsrA-binding protein (157 aa).

It belongs to the SmpB family.

The protein localises to the cytoplasm. In terms of biological role, required for rescue of stalled ribosomes mediated by trans-translation. Binds to transfer-messenger RNA (tmRNA), required for stable association of tmRNA with ribosomes. tmRNA and SmpB together mimic tRNA shape, replacing the anticodon stem-loop with SmpB. tmRNA is encoded by the ssrA gene; the 2 termini fold to resemble tRNA(Ala) and it encodes a 'tag peptide', a short internal open reading frame. During trans-translation Ala-aminoacylated tmRNA acts like a tRNA, entering the A-site of stalled ribosomes, displacing the stalled mRNA. The ribosome then switches to translate the ORF on the tmRNA; the nascent peptide is terminated with the 'tag peptide' encoded by the tmRNA and targeted for degradation. The ribosome is freed to recommence translation, which seems to be the essential function of trans-translation. The protein is SsrA-binding protein of Levilactobacillus brevis (strain ATCC 367 / BCRC 12310 / CIP 105137 / JCM 1170 / LMG 11437 / NCIMB 947 / NCTC 947) (Lactobacillus brevis).